Here is a 463-residue protein sequence, read N- to C-terminus: Paraneoplastic antigen Ma3 (463 aa).

Residues 363 to 410 form a disordered region; that stretch reads VGAVPLPASGNSFDARPSQGYRRRRGRGQHRRGGVARAGSRGSRKRKR. The segment covering 383–396 has biased composition (basic residues); it reads YRRRRGRGQHRRGG. The segment at 412–429 adopts a CCHC-type zinc-finger fold; the sequence is TFCYSCGEDGHIRVQCIN. Positions 440–463 are disordered; it reads KQAAVESGNGNWAWDKSHPKSKAK.

It belongs to the PNMA family. Expressed at high levels in the brain and testis. Expressed at lower levels in the heart, trachea and kidney.

The protein localises to the nucleus. It localises to the nucleolus. In Homo sapiens (Human), this protein is Paraneoplastic antigen Ma3 (PNMA3).